Consider the following 211-residue polypeptide: 3-demethoxyubiquinol 3-hydroxylase (211 aa).

Residues E60, E90, H93, E142, E174, and H177 each contribute to the Fe cation site.

The protein belongs to the COQ7 family. The cofactor is Fe cation.

It is found in the cell membrane. The catalysed reaction is a 5-methoxy-2-methyl-3-(all-trans-polyprenyl)benzene-1,4-diol + AH2 + O2 = a 3-demethylubiquinol + A + H2O. It participates in cofactor biosynthesis; ubiquinone biosynthesis. Its function is as follows. Catalyzes the hydroxylation of 2-nonaprenyl-3-methyl-6-methoxy-1,4-benzoquinol during ubiquinone biosynthesis. This Acinetobacter baumannii (strain AB307-0294) protein is 3-demethoxyubiquinol 3-hydroxylase.